Here is a 361-residue protein sequence, read N- to C-terminus: Phosphoserine aminotransferase (361 aa).

Residue Arg-43 coordinates L-glutamate. Pyridoxal 5'-phosphate is bound by residues 77–78 (AS), Trp-103, Thr-153, Asp-173, and Gln-196. An N6-(pyridoxal phosphate)lysine modification is found at Lys-197. 238–239 (NT) lines the pyridoxal 5'-phosphate pocket.

This sequence belongs to the class-V pyridoxal-phosphate-dependent aminotransferase family. SerC subfamily. As to quaternary structure, homodimer. The cofactor is pyridoxal 5'-phosphate.

The protein resides in the cytoplasm. The catalysed reaction is O-phospho-L-serine + 2-oxoglutarate = 3-phosphooxypyruvate + L-glutamate. The enzyme catalyses 4-(phosphooxy)-L-threonine + 2-oxoglutarate = (R)-3-hydroxy-2-oxo-4-phosphooxybutanoate + L-glutamate. It participates in amino-acid biosynthesis; L-serine biosynthesis; L-serine from 3-phospho-D-glycerate: step 2/3. It functions in the pathway cofactor biosynthesis; pyridoxine 5'-phosphate biosynthesis; pyridoxine 5'-phosphate from D-erythrose 4-phosphate: step 3/5. Functionally, catalyzes the reversible conversion of 3-phosphohydroxypyruvate to phosphoserine and of 3-hydroxy-2-oxo-4-phosphonooxybutanoate to phosphohydroxythreonine. In Stutzerimonas stutzeri (Pseudomonas stutzeri), this protein is Phosphoserine aminotransferase.